The following is a 117-amino-acid chain: Probable non-functional immunoglobulin kappa variable 1D-42 (117 aa).

Positions 1–22 are cleaved as a signal peptide; the sequence is MDMRVPAQLLGLLLLWLPGVRF. The framework-1 stretch occupies residues 23–45; the sequence is DIQMTQSPSFLSASVGDRVSIIC. Residues 23 to 117 form the Ig-like domain; the sequence is DIQMTQSPSF…YYCKQDFSYP (95 aa). C45 and C110 form a disulfide bridge. The complementarity-determining-1 stretch occupies residues 46–56; the sequence is WASEGISSNLA. A framework-2 region spans residues 57-71; that stretch reads WYLQKPGKSPKLFLY. Residues 72-78 are complementarity-determining-2; it reads DAKDLHP. Positions 79–110 are framework-3; the sequence is GVSSRFSGRGSGTDFTLTIISLKPEDFAAYYC. A complementarity-determining-3 region spans residues 111-117; it reads KQDFSYP.

As to quaternary structure, immunoglobulins are composed of two identical heavy chains and two identical light chains; disulfide-linked.

It localises to the secreted. The protein localises to the cell membrane. Its function is as follows. Probable non-functional open reading frame (ORF) of V region of the variable domain of immunoglobulin light chains. Non-functional ORF generally cannot participate in the synthesis of a productive immunoglobulin chain due to altered V-(D)-J or switch recombination and/or splicing site (at mRNA level) and/or conserved amino acid change (protein level). Immunoglobulins, also known as antibodies, are membrane-bound or secreted glycoproteins produced by B lymphocytes. In the recognition phase of humoral immunity, the membrane-bound immunoglobulins serve as receptors which, upon binding of a specific antigen, trigger the clonal expansion and differentiation of B lymphocytes into immunoglobulins-secreting plasma cells. Secreted immunoglobulins mediate the effector phase of humoral immunity, which results in the elimination of bound antigens. The antigen binding site is formed by the variable domain of one heavy chain, together with that of its associated light chain. Thus, each immunoglobulin has two antigen binding sites with remarkable affinity for a particular antigen. The variable domains are assembled by a process called V-(D)-J rearrangement and can then be subjected to somatic hypermutations which, after exposure to antigen and selection, allow affinity maturation for a particular antigen. This is Probable non-functional immunoglobulin kappa variable 1D-42 from Homo sapiens (Human).